Here is a 206-residue protein sequence, read N- to C-terminus: Ras-related protein Rab-18 (206 aa).

An N-acetylmethionine modification is found at Met1. GTP-binding residues include Ser17, Gly20, Lys21, Ser22, Ser23, Asp34, Pro35, Thr40, Gly66, Lys123, and Asp125. Residue Ser22 coordinates Mg(2+). 2 short sequence motifs (switch) span residues 31–45 (DTFD…GVDF) and 63–80 (DTAG…YYRG). Position 40 (Thr40) interacts with Mg(2+). Position 144 is a phosphoserine (Ser144). Position 152 (Ala152) interacts with GTP. Cys199 carries the S-palmitoyl cysteine lipid modification. Cys203 bears the Cysteine methyl ester mark. Residue Cys203 is the site of S-geranylgeranyl cysteine attachment. A propeptide spans 204 to 206 (SVL) (removed in mature form).

Belongs to the small GTPase superfamily. Rab family. In terms of assembly, interacts (in GTP-bound form) with ZFYVE1. Interacts with ZW10 and this interaction is enhanced in the presence of ZFYVE1. Interacts with BSCL2. The cofactor is Mg(2+). Expression is high in the brain, moderate in the pituitary, and low in the liver. Detected in all tissues. Highly enriched on apical endocytic structures in polarized epithelial cells of kidney proximal tubules. Detected on both the apical and basolateral domains in epithelial cells of the intestine.

Its subcellular location is the endoplasmic reticulum membrane. The protein resides in the golgi apparatus. The protein localises to the cis-Golgi network membrane. It is found in the lipid droplet. It localises to the apical cell membrane. The enzyme catalyses GTP + H2O = GDP + phosphate + H(+). With respect to regulation, regulated by guanine nucleotide exchange factor (GEF) RAB3GAP1-RAB3GAP2 complex at the cis-Golgi membrane which promotes the exchange of bound GDP for free GTP. Regulated by GTPase activating protein (GAP) TBC1D20 at the ER membrane which increases the GTP hydrolysis activity. Inhibited by GDP dissociation inhibitors (GDIs) which prevent Rab-GDP dissociation. The small GTPases Rab are key regulators of intracellular membrane trafficking, from the formation of transport vesicles to their fusion with membranes. Rabs cycle between an inactive GDP-bound form and an active GTP-bound form that is able to recruit to membranes different sets of downstream effectors directly responsible for vesicle formation, movement, tethering and fusion. RAB18 is required for the localization of ZFYVE1 to lipid droplets and for its function in mediating the formation of endoplasmic reticulum-lipid droplets (ER-LD) contacts. Also required for maintaining endoplasmic reticulum structure. Plays a role in apical endocytosis/recycling. Plays a key role in eye and brain development and neurodegeneration. The chain is Ras-related protein Rab-18 from Mus musculus (Mouse).